A 694-amino-acid polypeptide reads, in one-letter code: Type VI secretion system spike protein VgrG2 (694 aa).

This sequence belongs to the VgrG protein family.

Its subcellular location is the secreted. In terms of biological role, part of the type VI secretion system specialized secretion system, which delivers several virulence factors in both prokaryotic and eukaryotic cells during infection. Forms the spike at the tip of the elongating tube formed by haemolysin co-regulated protein Hcp. Allows the delivery of the VasX antibacterial toxin to target cells where it exerts its toxicity. The polypeptide is Type VI secretion system spike protein VgrG2 (vgrG2) (Vibrio cholerae serotype O1 (strain ATCC 39315 / El Tor Inaba N16961)).